The chain runs to 149 residues: Protein FAM72C (149 aa).

It belongs to the FAM72 family.

The protein is Protein FAM72C (FAM72C) of Homo sapiens (Human).